The sequence spans 1241 residues: Putative ABC transporter B family member 8 (1241 aa).

A helical transmembrane segment spans residues 24-44 (FADWIDIVLMVLGSVGAIGDG). An ABC transmembrane type-1 1 domain is found at 33–323 (MVLGSVGAIG…ALTEIRYFSE (291 aa)). Residue Asn-48 is glycosylated (N-linked (GlcNAc...) asparagine). Transmembrane regions (helical) follow at residues 82–102 (LYFVYLGLAILGVAFMEGYCW), 157–177 (VPIFLMHISVFITGLVFSAYF), 183–203 (VVAIPTLVLLLIPGLIYGKYL), 263–283 (GLAVGSSGISFTIWAFLAWYG), and 297–317 (IYAAGISFVLGGISLGTALTE). Residues 360 to 596 (VEFERVTLVY…NNHYAKLVKL (237 aa)) enclose the ABC transporter 1 domain. 395–402 (GASGSGKS) is an ATP binding site. Residues Asn-571, Asn-632, and Asn-648 are each glycosylated (N-linked (GlcNAc...) asparagine). The region spanning 676–964 (SLVGCISATT…AGSMTSDLAK (289 aa)) is the ABC transmembrane type-1 2 domain. Transmembrane regions (helical) follow at residues 686-706 (FGAIQPVYALSIGGMISAFFA) and 716-736 (IHIYSLIFISLTFLSITLNLL). N-linked (GlcNAc...) asparagine glycosylation occurs at Asn-773. 2 helical membrane-spanning segments follow: residues 797–815 (ISLLVQTISGVTIAMIIGL) and 821–838 (LALVMIAVQPLSILCFYT). Asn-855 carries an N-linked (GlcNAc...) asparagine glycan. Transmembrane regions (helical) follow at residues 899 to 919 (AWLAGFGMGSAQCLTFLTWAL) and 933 to 953 (ISAGDVFKTFFVLVSTGKVIA). Positions 998–1236 (IELKNIDFSY…GGQFSRLAHA (239 aa)) constitute an ABC transporter 2 domain. ATP is bound at residue 1033–1040 (GTSGCGKS). Asn-1187 carries an N-linked (GlcNAc...) asparagine glycan.

The protein belongs to the ABC transporter superfamily. ABCB family. Multidrug resistance exporter (TC 3.A.1.201) subfamily.

It is found in the membrane. The sequence is that of Putative ABC transporter B family member 8 (ABCB8) from Arabidopsis thaliana (Mouse-ear cress).